We begin with the raw amino-acid sequence, 140 residues long: Nucleoside diphosphate kinase (140 aa).

ATP-binding residues include Lys11, Phe59, Arg87, Thr93, Arg104, and Asn114. Catalysis depends on His117, which acts as the Pros-phosphohistidine intermediate.

The protein belongs to the NDK family. Homotetramer. Mg(2+) is required as a cofactor.

The protein localises to the cytoplasm. The catalysed reaction is a 2'-deoxyribonucleoside 5'-diphosphate + ATP = a 2'-deoxyribonucleoside 5'-triphosphate + ADP. It catalyses the reaction a ribonucleoside 5'-diphosphate + ATP = a ribonucleoside 5'-triphosphate + ADP. Its function is as follows. Major role in the synthesis of nucleoside triphosphates other than ATP. The ATP gamma phosphate is transferred to the NDP beta phosphate via a ping-pong mechanism, using a phosphorylated active-site intermediate. The sequence is that of Nucleoside diphosphate kinase from Agrobacterium fabrum (strain C58 / ATCC 33970) (Agrobacterium tumefaciens (strain C58)).